Reading from the N-terminus, the 1755-residue chain is Transposon Ty1-NL1 Gag-Pol polyprotein (1755 aa).

Polar residues-rich tracts occupy residues 1–23, 48–60, 71–86, and 131–152; these read MESQ…SVTS, TKAN…TPAS, SPQT…GPYQ, and PQYP…GNTF. 3 disordered regions span residues 1-86, 131-171, and 350-420; these read MESQ…GPYQ, PQYP…YVRP, and QQES…IRGS. Positions 153–165 are enriched in low complexity; sequence TDSSSADSDMTST. The interval 299–401 is RNA-binding; that stretch reads NNGIPINNKV…NSQSRTARAH (103 aa). Over residues 363–372 the composition is skewed to basic and acidic residues; the sequence is NPSDEKKDSR. Residues 373–412 show a composition bias toward polar residues; the sequence is TYTNTTKPKSITRNSQKPNNSQSRTARAHNVSTSNNSSGP. Asp-461 functions as the For protease activity; shared with dimeric partner in the catalytic mechanism. Positions 583–640 are integrase-type zinc finger-like; it reads NVHTSESTRKYPYPFIHRMLAHANAQTIRYSLKNNTITYFNESDVDWSSAIDYQCPDC. An Integrase catalytic domain is found at 660 to 835; it reads NSYEPFQYLH…AGLDISTLLP (176 aa). Positions 671 and 736 each coordinate Mg(2+). Disordered regions lie at residues 956-1120 and 1146-1172; these read SKAV…TCPK and DSFK…SNAY. Residues 960-969 are compositionally biased toward low complexity; that stretch reads SPTDSTPPST. Residues 1005–1015 show a composition bias toward polar residues; sequence STPQISDIEST. Residues 1038 to 1053 show a composition bias toward basic and acidic residues; that stretch reads ESSHTSKSKDFRHSDS. Polar residues-rich tracts occupy residues 1054 to 1082 and 1095 to 1106; these read YSDN…QTSE and SIDTSSSESNSL. Positions 1178–1212 match the Bipartite nuclear localization signal motif; that stretch reads KKRSLEDNETEIKVSRDTWNTKNMRSLEPPRSKKR. The region spanning 1338–1476 is the Reverse transcriptase Ty1/copia-type domain; that stretch reads NNYYITQLDI…DILGLEIKYQ (139 aa). Residues Asp-1346, Asp-1427, Asp-1428, Asp-1610, Glu-1652, and Asp-1685 each coordinate Mg(2+). Residues 1610–1752 form the RNase H Ty1/copia-type domain; that stretch reads DASYGNQPYY…IKTFKLLTNK (143 aa).

In terms of assembly, the capsid protein forms a homotrimer, from which the VLPs are assembled. The protease is a homodimer, whose active site consists of two apposed aspartic acid residues. Initially, virus-like particles (VLPs) are composed of the structural unprocessed proteins Gag and Gag-Pol, and also contain the host initiator methionine tRNA (tRNA(i)-Met) which serves as a primer for minus-strand DNA synthesis, and a dimer of genomic Ty RNA. Processing of the polyproteins occurs within the particle and proceeds by an ordered pathway, called maturation. First, the protease (PR) is released by autocatalytic cleavage of the Gag-Pol polyprotein yielding capsid protein p45 and a Pol-p154 precursor protein. This cleavage is a prerequisite for subsequent processing of Pol-p154 at the remaining sites to release the mature structural and catalytic proteins. Maturation takes place prior to the RT reaction and is required to produce transposition-competent VLPs.

Its subcellular location is the cytoplasm. The protein localises to the nucleus. The catalysed reaction is DNA(n) + a 2'-deoxyribonucleoside 5'-triphosphate = DNA(n+1) + diphosphate. It carries out the reaction Endonucleolytic cleavage to 5'-phosphomonoester.. Functionally, capsid protein (CA) is the structural component of the virus-like particle (VLP), forming the shell that encapsulates the retrotransposons dimeric RNA genome. The particles are assembled from trimer-clustered units and there are holes in the capsid shells that allow for the diffusion of macromolecules. CA also has nucleocapsid-like chaperone activity, promoting primer tRNA(i)-Met annealing to the multipartite primer-binding site (PBS), dimerization of Ty1 RNA and initiation of reverse transcription. Its function is as follows. The aspartyl protease (PR) mediates the proteolytic cleavages of the Gag and Gag-Pol polyproteins after assembly of the VLP. In terms of biological role, reverse transcriptase/ribonuclease H (RT) is a multifunctional enzyme that catalyzes the conversion of the retro-elements RNA genome into dsDNA within the VLP. The enzyme displays a DNA polymerase activity that can copy either DNA or RNA templates, and a ribonuclease H (RNase H) activity that cleaves the RNA strand of RNA-DNA heteroduplexes during plus-strand synthesis and hydrolyzes RNA primers. The conversion leads to a linear dsDNA copy of the retrotransposon that includes long terminal repeats (LTRs) at both ends. Integrase (IN) targets the VLP to the nucleus, where a subparticle preintegration complex (PIC) containing at least integrase and the newly synthesized dsDNA copy of the retrotransposon must transit the nuclear membrane. Once in the nucleus, integrase performs the integration of the dsDNA into the host genome. The sequence is that of Transposon Ty1-NL1 Gag-Pol polyprotein (TY1B-NL1) from Saccharomyces cerevisiae (strain ATCC 204508 / S288c) (Baker's yeast).